The following is a 255-amino-acid chain: Serine/threonine-protein phosphatase PP1 (255 aa).

Positions 2, 4, 30, and 62 each coordinate Mn(2+). Histidine 63 serves as the catalytic Proton donor. Residues histidine 111 and histidine 186 each contribute to the Mn(2+) site.

This sequence belongs to the PPP phosphatase family. PP-1 subfamily. Mn(2+) is required as a cofactor.

The enzyme catalyses O-phospho-L-seryl-[protein] + H2O = L-seryl-[protein] + phosphate. It catalyses the reaction O-phospho-L-threonyl-[protein] + H2O = L-threonyl-[protein] + phosphate. The protein is Serine/threonine-protein phosphatase PP1 of Brassica napus (Rape).